Consider the following 388-residue polypeptide: Processive diacylglycerol beta-glucosyltransferase (388 aa).

Belongs to the glycosyltransferase 28 family. UgtP subfamily.

Its subcellular location is the cell membrane. It catalyses the reaction a 1,2-diacyl-3-O-(beta-D-glucopyranosyl)-sn-glycerol + UDP-alpha-D-glucose = a 1,2-diacyl-3-O-(beta-D-Glc-(1-&gt;6)-beta-D-Glc)-sn-glycerol + UDP + H(+). The catalysed reaction is a 1,2-diacyl-3-O-(beta-D-Glc-(1-&gt;6)-beta-D-Glc)-sn-glycerol + UDP-alpha-D-glucose = a 1,2-diacyl-3-O-(beta-D-Glc-(1-&gt;6)-beta-D-Glc-(1-&gt;6)-beta-D-Glc)-sn-glycerol + UDP + H(+). It carries out the reaction a 1,2-diacyl-sn-glycerol + UDP-alpha-D-glucose = a 1,2-diacyl-3-O-(beta-D-glucopyranosyl)-sn-glycerol + UDP + H(+). It participates in glycolipid metabolism; diglucosyl-diacylglycerol biosynthesis. Processive glucosyltransferase involved in the biosynthesis of both the bilayer- and non-bilayer-forming membrane glucolipids. Is able to successively transfer up to three glucosyl residues to diacylglycerol (DAG), thereby catalyzing the formation of beta-monoglucosyl-DAG (3-O-(beta-D-glucopyranosyl)-1,2-diacyl-sn-glycerol), beta-diglucosyl-DAG (3-O-(beta-D-glucopyranosyl-beta-(1-&gt;6)-D-glucopyranosyl)-1,2-diacyl-sn-glycerol) and beta-triglucosyl-DAG (3-O-(beta-D-glucopyranosyl-beta-(1-&gt;6)-D-glucopyranosyl-beta-(1-&gt;6)-D-glucopyranosyl)-1,2-diacyl-sn-glycerol). Beta-diglucosyl-DAG is the predominant glycolipid found in Bacillales and is also used as a membrane anchor for lipoteichoic acid (LTA). The protein is Processive diacylglycerol beta-glucosyltransferase of Bacillus cereus (strain ZK / E33L).